We begin with the raw amino-acid sequence, 461 residues long: L-seryl-tRNA(Sec) selenium transferase (461 aa).

Lysine 294 is subject to N6-(pyridoxal phosphate)lysine.

This sequence belongs to the SelA family. Pyridoxal 5'-phosphate serves as cofactor.

The protein localises to the cytoplasm. It carries out the reaction L-seryl-tRNA(Sec) + selenophosphate + H(+) = L-selenocysteinyl-tRNA(Sec) + phosphate. The protein operates within aminoacyl-tRNA biosynthesis; selenocysteinyl-tRNA(Sec) biosynthesis; selenocysteinyl-tRNA(Sec) from L-seryl-tRNA(Sec) (bacterial route): step 1/1. In terms of biological role, converts seryl-tRNA(Sec) to selenocysteinyl-tRNA(Sec) required for selenoprotein biosynthesis. This is L-seryl-tRNA(Sec) selenium transferase from Actinobacillus pleuropneumoniae serotype 5b (strain L20).